The chain runs to 152 residues: Flagellar assembly factor FliW (152 aa).

It belongs to the FliW family. In terms of assembly, interacts with translational regulator CsrA and flagellin(s).

It is found in the cytoplasm. Its function is as follows. Acts as an anti-CsrA protein, binds CsrA and prevents it from repressing translation of its target genes, one of which is flagellin. Binds to flagellin and participates in the assembly of the flagellum. This Desulfitobacterium hafniense (strain DSM 10664 / DCB-2) protein is Flagellar assembly factor FliW.